Consider the following 230-residue polypeptide: Orotidine 5'-phosphate decarboxylase (230 aa).

Substrate-binding positions include aspartate 10, lysine 31, 58-67 (DLKLHDIPNT), threonine 117, arginine 179, glutamine 188, glycine 208, and arginine 209. Lysine 60 functions as the Proton donor in the catalytic mechanism.

This sequence belongs to the OMP decarboxylase family. Type 1 subfamily. Homodimer.

The enzyme catalyses orotidine 5'-phosphate + H(+) = UMP + CO2. Its pathway is pyrimidine metabolism; UMP biosynthesis via de novo pathway; UMP from orotate: step 2/2. Functionally, catalyzes the decarboxylation of orotidine 5'-monophosphate (OMP) to uridine 5'-monophosphate (UMP). The sequence is that of Orotidine 5'-phosphate decarboxylase from Staphylococcus epidermidis (strain ATCC 12228 / FDA PCI 1200).